A 130-amino-acid chain; its full sequence is Fumarate reductase subunit C (130 aa).

Transmembrane regions (helical) follow at residues 37–57 (VWFS…PAGW), 60–80 (FVGF…LLAA), and 109–129 (VIKA…AVAL).

This sequence belongs to the FrdC family. In terms of assembly, part of an enzyme complex containing four subunits: a flavoprotein (FrdA), an iron-sulfur protein (FrdB), and two hydrophobic anchor proteins (FrdC and FrdD).

It localises to the cell inner membrane. Functionally, two distinct, membrane-bound, FAD-containing enzymes are responsible for the catalysis of fumarate and succinate interconversion; fumarate reductase is used in anaerobic growth, and succinate dehydrogenase is used in aerobic growth. Anchors the catalytic components of the fumarate reductase complex to the cell inner membrane, binds quinones. In Yersinia enterocolitica serotype O:8 / biotype 1B (strain NCTC 13174 / 8081), this protein is Fumarate reductase subunit C.